The primary structure comprises 668 residues: UvrABC system protein B (668 aa).

The 158-residue stretch at 31-188 (HGIEAGEKAQ…RKLVNIQFER (158 aa)) folds into the Helicase ATP-binding domain. 44 to 51 (GATGTGKT) contributes to the ATP binding site. The Beta-hairpin signature appears at 97-120 (YYDYYQPEAYVPSSDTYIEKDSSI). The region spanning 435–601 (QMDDLVGEIN…TIIKPIRDLI (167 aa)) is the Helicase C-terminal domain. In terms of domain architecture, UVR spans 630–665 (EKLIARLEDEMRAAAKKLDFEQAASLRDTIMDMKTE).

This sequence belongs to the UvrB family. As to quaternary structure, forms a heterotetramer with UvrA during the search for lesions. Interacts with UvrC in an incision complex.

Its subcellular location is the cytoplasm. Its function is as follows. The UvrABC repair system catalyzes the recognition and processing of DNA lesions. A damage recognition complex composed of 2 UvrA and 2 UvrB subunits scans DNA for abnormalities. Upon binding of the UvrA(2)B(2) complex to a putative damaged site, the DNA wraps around one UvrB monomer. DNA wrap is dependent on ATP binding by UvrB and probably causes local melting of the DNA helix, facilitating insertion of UvrB beta-hairpin between the DNA strands. Then UvrB probes one DNA strand for the presence of a lesion. If a lesion is found the UvrA subunits dissociate and the UvrB-DNA preincision complex is formed. This complex is subsequently bound by UvrC and the second UvrB is released. If no lesion is found, the DNA wraps around the other UvrB subunit that will check the other stand for damage. This Levilactobacillus brevis (strain ATCC 367 / BCRC 12310 / CIP 105137 / JCM 1170 / LMG 11437 / NCIMB 947 / NCTC 947) (Lactobacillus brevis) protein is UvrABC system protein B.